A 1231-amino-acid chain; its full sequence is MIAAPEIPTDFNLLQESETHFSSDTDFEDIEGKNQKQGKGKTCKKGKKGPAEKGKSGNGGGKPPSGSNRMNGHHQQNGVENMMLFEVVKMGKSAMQSVVDDWIESYKHDRDIALLDLINFFIQCSGCKGVVTAEMFRHMQNSEIIRKMTEEFDEDSGDYPLTMAGPQWKKFKSSFCEFIGVLVRQCQYSIIYDEYMMDTVISLLTGLSDSQVRAFRHTSTLAAMKLMTALVNVALNLSINMDNTQRQYEAERNKMIGKRANERLELLLQKRKELQENQDEIENMMNAIFKGVFVHRYRDAIAEIRAICIEEIGIWMKMYSDAFLNDSYLKYVGWTMHDKQGEVRLKCLTALQGLYYNKELNSKLELFTSRFKDRIVSMTLDKEYDVAVQAIKLLTLVLQSSEEVLTAEDCENVYHLVYSAHRPVAVAAGEFLYKKLFSRRDPEEDGLMKRRGRQGPNANLVKTLVFFFLESELHEHAAYLVDSMWDCATELLKDWECMNSLLLEEPLSGEEALTDRQESALIEIMLCTIRQAAECHPPVGRGTGKRVLTAKEKKTQLDDRTRITELFAVALPQLLAKYSVDAEKVTNLLQLPQYFDLEIYTTGRLEKHLDALLRQIRNIVEKHTDTDVLEACSKTYHALCNEEFTIFNRVDISRSQLIDELADKFNRLLEDFLQEGEEPDEDDAYQVLSTLKRITAFHNAHDLSKWDLFACNYKLLKTGIENGDMPEQIVIHALQCAHYVILWQLAKITESTSTKEDLLRLKKQMRVFCQICQHYLTNVNTTVKEQAFTILCDILMIFSHQIMSGGRDMLEPLVYTPDSSLQSELLSFILDHVFIEQDDDSNSADGQQEDEASKIEALHKRRNLLAAFCKLIVYTVVEMNTAADIFKQYMKYYNDYGDIIKETMSKTRQIDKIQCAKTLILSLQQLFNEMIQENGYNFDRSSSTFSGIKELARRFALTFGLDQLKTREAIAMLHKDGIEFAFKEPNPQGESHPPLNLAFLDILSEFSSKLLRQDKRTVYVYLEKFMTFQMSLRREDVWLPLMSYRNSLLAGGDDDTMSVISGMSSRGSTVRSKKSKPSTGKRKVVEGMQLALPEESSSSDSMWLSREQTLHTPVMMQTPQLTSTIMREPKRLRPEDSFMSVYPMQAEHHQTPLDYNRRGTSLMEDDEEPIVEDVMMSSEGRIEDLNEGMDFDTMDIDLPPSKNRRERTELKPDFFDPASIMDESVLGVSMF.

An N-acetylmethionine modification is found at Met-1. The segment at 1 to 75 is disordered; that stretch reads MIAAPEIPTD…GSNRMNGHHQ (75 aa). Basic residues predominate over residues 36-48; the sequence is KQGKGKTCKKGKK. The SCD domain occupies 293-378; the sequence is FVHRYRDAIA…SRFKDRIVSM (86 aa). The residue at position 607 (Lys-607) is an N6-acetyllysine. Phosphoserine occurs at positions 1058, 1061, 1064, and 1065. A disordered region spans residues 1062–1087; that stretch reads GMSSRGSTVRSKKSKPSTGKRKVVEG. Residues 1071–1082 show a composition bias toward basic residues; it reads RSKKSKPSTGKR. Phosphothreonine is present on Thr-1112. Phosphoserine occurs at positions 1177 and 1178.

Belongs to the SCC3 family. As to quaternary structure, interacts directly with RAD21 in cohesin complex. Cohesin complexes are composed of a heterodimer between a SMC1 protein (SMC1A or SMC1B) and SMC3, which are attached via their hinge domain, and RAD21 which link them at their heads, and one STAG protein (STAG1, STAG2 or STAG3). In cohesin complexes, STAG2 is mutually exclusive with STAG1 and STAG3. In terms of processing, phosphorylated by PLK1. The large dissociation of cohesin from chromosome arms during prophase is partly due to its phosphorylation.

It localises to the nucleus. It is found in the chromosome. The protein localises to the centromere. Component of cohesin complex, a complex required for the cohesion of sister chromatids after DNA replication. The cohesin complex apparently forms a large proteinaceous ring within which sister chromatids can be trapped. At anaphase, the complex is cleaved and dissociates from chromatin, allowing sister chromatids to segregate. The cohesin complex may also play a role in spindle pole assembly during mitosis. The sequence is that of Cohesin subunit SA-2 (Stag2) from Mus musculus (Mouse).